The sequence spans 481 residues: Proline--tRNA ligase (481 aa).

It belongs to the class-II aminoacyl-tRNA synthetase family. ProS type 3 subfamily. In terms of assembly, homodimer.

The protein localises to the cytoplasm. The enzyme catalyses tRNA(Pro) + L-proline + ATP = L-prolyl-tRNA(Pro) + AMP + diphosphate. Catalyzes the attachment of proline to tRNA(Pro) in a two-step reaction: proline is first activated by ATP to form Pro-AMP and then transferred to the acceptor end of tRNA(Pro). Can inadvertently accommodate and process cysteine. Misacylated Cys-tRNA(Pro) is not edited by ProRS; this function may be provided by ProX. This chain is Proline--tRNA ligase (proS), found in Acetoanaerobium sticklandii (strain ATCC 12662 / DSM 519 / JCM 1433 / CCUG 9281 / NCIMB 10654 / HF) (Clostridium sticklandii).